The sequence spans 315 residues: Cobalamin biosynthesis protein CobD (315 aa).

A run of 5 helical transmembrane segments spans residues 48–70 (IAGI…LSVQ), 75–94 (LHWI…TIAI), 148–170 (LVDG…AMLY), 208–230 (ITSY…SLYI), and 292–314 (LILL…AAYF).

This sequence belongs to the CobD/CbiB family.

It localises to the cell membrane. It participates in cofactor biosynthesis; adenosylcobalamin biosynthesis. Converts cobyric acid to cobinamide by the addition of aminopropanol on the F carboxylic group. This Leptospira interrogans serogroup Icterohaemorrhagiae serovar copenhageni (strain Fiocruz L1-130) protein is Cobalamin biosynthesis protein CobD.